Consider the following 515-residue polypeptide: ATP synthase subunit alpha (515 aa).

Gly-171 to Thr-178 is an ATP binding site.

Belongs to the ATPase alpha/beta chains family. As to quaternary structure, F-type ATPases have 2 components, CF(1) - the catalytic core - and CF(0) - the membrane proton channel. CF(1) has five subunits: alpha(3), beta(3), gamma(1), delta(1), epsilon(1). CF(0) has three main subunits: a(1), b(2) and c(9-12). The alpha and beta chains form an alternating ring which encloses part of the gamma chain. CF(1) is attached to CF(0) by a central stalk formed by the gamma and epsilon chains, while a peripheral stalk is formed by the delta and b chains.

It is found in the cell inner membrane. It catalyses the reaction ATP + H2O + 4 H(+)(in) = ADP + phosphate + 5 H(+)(out). Produces ATP from ADP in the presence of a proton gradient across the membrane. The alpha chain is a regulatory subunit. The chain is ATP synthase subunit alpha from Xylella fastidiosa (strain 9a5c).